We begin with the raw amino-acid sequence, 1350 residues long: uncharacterized protein (1350 aa).

Disordered stretches follow at residues 348 to 371 (SLVG…LDDS) and 923 to 944 (SKME…RGTG). The span at 923-932 (SKMEGGERDA) shows a compositional bias: basic and acidic residues.

This is an uncharacterized protein from Ictalurid herpesvirus 1 (strain Auburn) (IcHV-1).